The following is a 663-amino-acid chain: UvrABC system protein B (663 aa).

Residues 30 to 417 enclose the Helicase ATP-binding domain; sequence DGIKAGKRHQ…TDKMVEQIIR (388 aa). 43 to 50 contributes to the ATP binding site; that stretch reads GATGTGKT. Positions 96–119 match the Beta-hairpin motif; the sequence is YYDYYQPEAYVPSTDTFIEKDASI. The region spanning 434–600 is the Helicase C-terminal domain; sequence QIDDLLSEIQ…TINKKIHDLI (167 aa). Positions 627–662 constitute a UVR domain; the sequence is QKTIDNIEKEMKQAAKDLDFEKATELRDMLFELKAE.

Belongs to the UvrB family. Forms a heterotetramer with UvrA during the search for lesions. Interacts with UvrC in an incision complex.

It is found in the cytoplasm. In terms of biological role, the UvrABC repair system catalyzes the recognition and processing of DNA lesions. A damage recognition complex composed of 2 UvrA and 2 UvrB subunits scans DNA for abnormalities. Upon binding of the UvrA(2)B(2) complex to a putative damaged site, the DNA wraps around one UvrB monomer. DNA wrap is dependent on ATP binding by UvrB and probably causes local melting of the DNA helix, facilitating insertion of UvrB beta-hairpin between the DNA strands. Then UvrB probes one DNA strand for the presence of a lesion. If a lesion is found the UvrA subunits dissociate and the UvrB-DNA preincision complex is formed. This complex is subsequently bound by UvrC and the second UvrB is released. If no lesion is found, the DNA wraps around the other UvrB subunit that will check the other stand for damage. This is UvrABC system protein B from Staphylococcus aureus (strain Mu50 / ATCC 700699).